The primary structure comprises 694 residues: DNA ligase (694 aa).

Residues 41 to 45 (DAEFD), 91 to 92 (SL), and E121 each bind NAD(+). Catalysis depends on K123, which acts as the N6-AMP-lysine intermediate. The NAD(+) site is built by R144, E184, K300, and K324. Zn(2+) is bound by residues C418, C421, C437, and C443. One can recognise a BRCT domain in the interval 607 to 694 (SVLPTCEGLT…QGPPVQQVVD (88 aa)).

Belongs to the NAD-dependent DNA ligase family. LigA subfamily. It depends on Mg(2+) as a cofactor. Requires Mn(2+) as cofactor.

The catalysed reaction is NAD(+) + (deoxyribonucleotide)n-3'-hydroxyl + 5'-phospho-(deoxyribonucleotide)m = (deoxyribonucleotide)n+m + AMP + beta-nicotinamide D-nucleotide.. In terms of biological role, DNA ligase that catalyzes the formation of phosphodiester linkages between 5'-phosphoryl and 3'-hydroxyl groups in double-stranded DNA using NAD as a coenzyme and as the energy source for the reaction. It is essential for DNA replication and repair of damaged DNA. The polypeptide is DNA ligase (Mycobacterium leprae (strain TN)).